We begin with the raw amino-acid sequence, 425 residues long: MASSIICQEHCQISGQAKIDILLVGDVTVGYLADTVQKLFANIAEVTITISDTKEAAALLDDCIFNMVLLKVPSSLSAEELEAIKLIRFGKKKNTHSLFVFIIPENFKGCISGHGMDIALTEPLTMEKMSNVVKYWTTCPSNTVKTENATGPEELGLPLQRSYSEHLGYFPTDLFACSESLRNGNGLELNASLSEFEKNKKISLLHSSKEKLRRERIKYCCEQLRTLLPYVKGRKNDAASVLEATVDYVKYIREKISPAVMAQITEALQSNMRFCKKQQTPIELSLPGTVMAQRENSVMSTYSPERGLQFLTNTCWNGCSTPDAESSLDEAVRVPSSSASENAIGDPYKTHISSAALSLNSLHTVRYYSKVTPSYDATAVTNQNISIHLPSAMPPVSKLLPRHCTSGLGQTCTTHPNCLQQFWAY.

The 52-residue stretch at lysine 201–isoleucine 252 folds into the bHLH domain.

In terms of assembly, forms both hetero- and homodimers with SOHLH1.

The protein localises to the nucleus. It localises to the cytoplasm. Transcription regulator of both male and female germline differentiation. Suppresses genes involved in spermatogonial stem cells maintenance, and induces genes important for spermatogonial differentiation. Coordinates oocyte differentiation without affecting meiosis I. The sequence is that of Spermatogenesis- and oogenesis-specific basic helix-loop-helix-containing protein 2 (SOHLH2) from Homo sapiens (Human).